The chain runs to 193 residues: Bcl-2-like protein 2 (193 aa).

At alanine 2 the chain carries N-acetylalanine. Positions 9–29 (DTRALVADFVGYKLRQKGYVC) match the BH4 motif. Residues 85 to 104 (ELFQGGPNWGRLVAFFVFGA) carry the BH1 motif. Positions 136-151 (DWIHSSGGWAEFTALY) match the BH2 motif.

This sequence belongs to the Bcl-2 family. In terms of assembly, interacts with HIF3A (via C-terminus domain). Interacts with BOP.

The protein localises to the mitochondrion membrane. Promotes cell survival. Blocks dexamethasone-induced apoptosis. Mediates survival of postmitotic Sertoli cells by suppressing death-promoting activity of BAX. The protein is Bcl-2-like protein 2 (BCL2L2) of Bos taurus (Bovine).